A 176-amino-acid polypeptide reads, in one-letter code: Glutathione-regulated potassium-efflux system ancillary protein KefF (176 aa).

Residues H8, 14–17 (SHAN), 65–68 (MQWY), and 105–108 (TTGG) each bind FMN.

This sequence belongs to the NAD(P)H dehydrogenase (quinone) family. KefF subfamily. In terms of assembly, homodimer. Interacts with KefC. It depends on FMN as a cofactor.

It localises to the cell inner membrane. The catalysed reaction is a quinone + NADH + H(+) = a quinol + NAD(+). It carries out the reaction a quinone + NADPH + H(+) = a quinol + NADP(+). In terms of biological role, regulatory subunit of a potassium efflux system that confers protection against electrophiles. Required for full activity of KefC. Shows redox enzymatic activity, but this enzymatic activity is not required for activation of KefC. The sequence is that of Glutathione-regulated potassium-efflux system ancillary protein KefF from Salmonella dublin (strain CT_02021853).